The sequence spans 77 residues: U8-lycotoxin-Ls1m (77 aa).

The first 20 residues, 1–20 (MKLMIFTGLFLFAIVSLIEA), serve as a signal peptide directing secretion. A propeptide spanning residues 21 to 26 (QAENEK) is cleaved from the precursor.

Belongs to the neurotoxin 19 (CSTX) family. 08 (U8-Lctx) subfamily. Post-translationally, contains 4 disulfide bonds. In terms of tissue distribution, expressed by the venom gland.

It localises to the secreted. This is U8-lycotoxin-Ls1m from Lycosa singoriensis (Wolf spider).